Consider the following 511-residue polypeptide: MQSVLVLDFGSQYTQLIARRIRELNIYSEILPYNTPADTIRTHQPKAIILSGGPNSVYDQTAFMPDPAIFSLGIPVLGICYGLQAIAKHFGGVVASSNKHEFGRSKILVEQQGDNPLFQNIPNSDVWMSHGDKVMQLPEGFRATASSDNSEICAFESTGVNSPAHIYGLQFHPEVQHTLYGKEMLGNFLLNIAAITPDWSSKSFIEHQIEEIRRKAGNNTVICGISGGVDSTVAAVLVSKAIGKQLHCVFVDNGLLRKNEAEKVMHFLKPLGLHITLADSSDLFLKRLKGVASPEKKRKIIGRTFIQVFEEQIHHEKFLVQGTLYPDVIESISVKGPSETIKSHHNVGGLPKRMKLKLIEPLRELFKDEVRAVGRELGIPEDILMRHPFPGPGLAVRVLGSLTHERLEILREADEIYIEELQASGLYSKVWQAFAVLLPVQSVGVMGDKRTYENVLALRAVESSDGMTADWAPLPHDFLARVSNRIINEVRGINRVAYDISSKPPATIEWE.

The 196-residue stretch at 3–198 (SVLVLDFGSQ…LLNIAAITPD (196 aa)) folds into the Glutamine amidotransferase type-1 domain. Residue Cys80 is the Nucleophile of the active site. Residues His172 and Glu174 contribute to the active site. A GMPS ATP-PPase domain is found at 199 to 386 (WSSKSFIEHQ…LGIPEDILMR (188 aa)). 226-232 (SGGVDST) provides a ligand contact to ATP.

Homodimer.

It catalyses the reaction XMP + L-glutamine + ATP + H2O = GMP + L-glutamate + AMP + diphosphate + 2 H(+). It functions in the pathway purine metabolism; GMP biosynthesis; GMP from XMP (L-Gln route): step 1/1. Its function is as follows. Catalyzes the synthesis of GMP from XMP. This is GMP synthase [glutamine-hydrolyzing] from Chlorobium chlorochromatii (strain CaD3).